Reading from the N-terminus, the 225-residue chain is UPF0758 protein Vapar_4033 (225 aa).

An MPN domain is found at 103–225; it reads VFDSPGTVKQ…SYSMAEKGLL (123 aa). Zn(2+) contacts are provided by His-174, His-176, and Asp-187. The JAMM motif motif lies at 174–187; it reads HNHPSGSIEPSRAD.

The protein belongs to the UPF0758 family.

This is UPF0758 protein Vapar_4033 from Variovorax paradoxus (strain S110).